The sequence spans 283 residues: Adenylate kinase 2, chloroplastic (283 aa).

A chloroplast-targeting transit peptide spans 1–59; that stretch reads MTGCVNSISPPPVTLYRHRASPSRSSFSLSGDALHSLYRHRRVSRSPSIIAPKFQIVAA. An ATP-binding site is contributed by 74–79; the sequence is ASGKGT. Positions 94-123 are NMP; that stretch reads SAGDLLRAEIASGSENGRRAKEHMEKGQLV. Residues R100, 121–123, 150–153, and Q157 each bind AMP; these read QLV and GYPR. Residues 187–220 are LID; sequence GRRLDPVTGKIYHLKYSPPETEEIAVRLTQRFDD. Residue R188 participates in ATP binding. Residues R217 and R228 each contribute to the AMP site.

Belongs to the adenylate kinase family. As to quaternary structure, monomer.

The protein resides in the plastid. It localises to the chloroplast stroma. It carries out the reaction AMP + ATP = 2 ADP. Its function is as follows. Catalyzes the reversible transfer of the terminal phosphate group between ATP and AMP. Plays an important role in cellular energy homeostasis and in adenine nucleotide metabolism. Plays a major role in the equilibration of adenylates and de novo synthesis of ADP in the plastid stroma. The sequence is that of Adenylate kinase 2, chloroplastic from Arabidopsis thaliana (Mouse-ear cress).